The sequence spans 111 residues: Ferredoxin-thioredoxin reductase, catalytic chain (111 aa).

C52 contributes to the [4Fe-4S] cluster binding site. The active-site Nucleophile is C54. A disulfide bridge connects residues C54 and C84. [4Fe-4S] cluster is bound by residues C71, C73, and C82.

It belongs to the ferredoxin thioredoxin reductase beta subunit family. Heterodimer of subunit A (variable subunit) and subunit B (catalytic subunit). Heterodimeric FTR forms a complex with ferredoxin and thioredoxin. Requires [4Fe-4S] cluster as cofactor.

The protein localises to the plastid. The protein resides in the chloroplast. The catalysed reaction is [thioredoxin]-disulfide + 2 reduced [2Fe-2S]-[ferredoxin] + 2 H(+) = [thioredoxin]-dithiol + 2 oxidized [2Fe-2S]-[ferredoxin]. In terms of biological role, catalytic subunit of the ferredoxin-thioredoxin reductase (FTR), which catalyzes the two-electron reduction of thioredoxins by the electrons provided by reduced ferredoxin. This is Ferredoxin-thioredoxin reductase, catalytic chain (ftrB) from Cyanidium caldarium (Red alga).